Consider the following 252-residue polypeptide: Ubiquinone biosynthesis O-methyltransferase (252 aa).

Arginine 51, glycine 70, aspartate 91, and methionine 136 together coordinate S-adenosyl-L-methionine.

This sequence belongs to the methyltransferase superfamily. UbiG/COQ3 family.

It carries out the reaction a 3-demethylubiquinol + S-adenosyl-L-methionine = a ubiquinol + S-adenosyl-L-homocysteine + H(+). The enzyme catalyses a 3-(all-trans-polyprenyl)benzene-1,2-diol + S-adenosyl-L-methionine = a 2-methoxy-6-(all-trans-polyprenyl)phenol + S-adenosyl-L-homocysteine + H(+). The protein operates within cofactor biosynthesis; ubiquinone biosynthesis. Its function is as follows. O-methyltransferase that catalyzes the 2 O-methylation steps in the ubiquinone biosynthetic pathway. This Albidiferax ferrireducens (strain ATCC BAA-621 / DSM 15236 / T118) (Rhodoferax ferrireducens) protein is Ubiquinone biosynthesis O-methyltransferase.